The following is a 155-amino-acid chain: uncharacterized protein (155 aa).

The next 5 membrane-spanning stretches (helical) occupy residues 4–24 (IVGALAVFVITYALFSAAGYL), 46–66 (AIGIIWAILFALISLSAAIVY), 77–97 (FWFTLLINYVLNQAFSYFQFT), 101–121 (LLAASLDCLLVAITAIVLLII), and 130–150 (SYLLLPYFLWSAFATFLSFTI).

Belongs to the TspO/BZRP family.

The protein localises to the cell membrane. This is an uncharacterized protein from Bacillus subtilis (strain 168).